A 118-amino-acid chain; its full sequence is MLRHMLKSKIHRAVVTDANLNYVGSITIDRDLMDAADILENEKVTIVNNNNGARFDTYVIEGERGSKVICLNGAASRLVQKGDVVIILTYTVLQDEECHNHKPRLVFMDGNNNIKELG.

Ser-25 acts as the Schiff-base intermediate with substrate; via pyruvic acid in catalysis. Ser-25 is modified (pyruvic acid (Ser)). Thr-57 serves as a coordination point for substrate. Catalysis depends on Tyr-58, which acts as the Proton donor. Residue Gly-73–Ala-75 coordinates substrate.

It belongs to the PanD family. In terms of assembly, heterooctamer of four alpha and four beta subunits. Pyruvate serves as cofactor. Post-translationally, is synthesized initially as an inactive proenzyme, which is activated by self-cleavage at a specific serine bond to produce a beta-subunit with a hydroxyl group at its C-terminus and an alpha-subunit with a pyruvoyl group at its N-terminus.

The protein resides in the cytoplasm. It carries out the reaction L-aspartate + H(+) = beta-alanine + CO2. It functions in the pathway cofactor biosynthesis; (R)-pantothenate biosynthesis; beta-alanine from L-aspartate: step 1/1. Its function is as follows. Catalyzes the pyruvoyl-dependent decarboxylation of aspartate to produce beta-alanine. This is Aspartate 1-decarboxylase from Syntrophomonas wolfei subsp. wolfei (strain DSM 2245B / Goettingen).